Here is a 669-residue protein sequence, read N- to C-terminus: Exostosin-like 1 (669 aa).

Residues methionine 1–phenylalanine 8 are Cytoplasmic-facing. A helical; Signal-anchor for type II membrane protein transmembrane segment spans residues tryptophan 9–leucine 29. At alanine 30–proline 669 the chain is on the lumenal side. Residues asparagine 263 and asparagine 480 are each glycosylated (N-linked (GlcNAc...) asparagine). Cysteine 577 and cysteine 627 are oxidised to a cystine. The disordered stretch occupies residues arginine 601 to glutamine 621.

Belongs to the glycosyltransferase 47 family.

Its subcellular location is the endoplasmic reticulum membrane. It catalyses the reaction 3-O-{[(1-&gt;4)-beta-D-GlcA-(1-&gt;4)-alpha-D-GlcNAc](n)-(1-&gt;4)-beta-D-GlcA-(1-&gt;3)-beta-D-Gal-(1-&gt;3)-beta-D-Gal-(1-&gt;4)-beta-D-Xyl}-L-seryl-[protein] + UDP-N-acetyl-alpha-D-glucosamine = 3-O-{alpha-D-GlcNAc-[(1-&gt;4)-beta-D-GlcA-(1-&gt;4)-alpha-D-GlcNAc](n)-(1-&gt;4)-beta-D-GlcA-(1-&gt;3)-beta-D-Gal-(1-&gt;3)-beta-D-Gal-(1-&gt;4)-beta-D-Xyl}-L-seryl-[protein] + UDP + H(+). Its pathway is protein modification; protein glycosylation. In terms of biological role, glycosyltransferase required for the biosynthesis of heparan-sulfate (HS). Transfers N-acetyl-alpha-D-glucosamine to the nascent HS chain (GlcNAcT-II activity). Appears to lack GlcNAcT I and GlcAT-II activities. The chain is Exostosin-like 1 (Extl1) from Mus musculus (Mouse).